Consider the following 54-residue polypeptide: Protein PIGBOS1 (54 aa).

Residues 1 to 4 (MFRR) lie on the Mitochondrial intermembrane side of the membrane. Residues 5–25 (LTFAQLLFATVLGIAGGVYIF) form a helical membrane-spanning segment. The Cytoplasmic segment spans residues 26 to 54 (QPVFEQYAKDQKELKEKMQLVQESEEKKS). The interval 30-36 (EQYAKDQ) is required for interaction with CLCC1.

In terms of assembly, homooligomer. Interacts (via C-terminus) with endoplasmic reticulum (ER) protein CLCC1; the interaction occurs at the mitochondria-associated ER membrane, a zone of contact between the ER and mitochondrial membranes, but does not appear to play a role in ER-mitochondria tethering and is not affected by ER stress.

The protein resides in the mitochondrion outer membrane. Its function is as follows. Plays a role in regulation of the unfolded protein response triggered by endoplasmic reticulum (ER) stress resulting from the presence of unfolded proteins in the ER lumen. The chain is Protein PIGBOS1 from Homo sapiens (Human).